A 387-amino-acid polypeptide reads, in one-letter code: Pepsin A (387 aa).

A signal peptide spans 1-15; that stretch reads MKWLLLLSLVALSEC. Positions 16–61 are cleaved as a propeptide — activation peptide; it reads LYKVSLIKKKSLRKNLIEHGLLKDFLKNNTLDPASKYFPQGEAATM. One can recognise a Peptidase A1 domain in the interval 75 to 384; that stretch reads YFGTIGIGTP…DRANNQVGLA (310 aa). Aspartate 93 is a catalytic residue. An intrachain disulfide couples cysteine 106 to cysteine 111. Residue serine 129 is modified to Phosphoserine. The cysteines at positions 267 and 271 are disulfide-linked. The active site involves aspartate 276. Cysteines 310 and 343 form a disulfide.

Belongs to the peptidase A1 family.

The protein resides in the secreted. It catalyses the reaction Preferential cleavage: hydrophobic, preferably aromatic, residues in P1 and P1' positions. Cleaves 1-Phe-|-Val-2, 4-Gln-|-His-5, 13-Glu-|-Ala-14, 14-Ala-|-Leu-15, 15-Leu-|-Tyr-16, 16-Tyr-|-Leu-17, 23-Gly-|-Phe-24, 24-Phe-|-Phe-25 and 25-Phe-|-Tyr-26 bonds in the B chain of insulin.. With respect to regulation, inhibited by pepstatin. Shows particularly broad specificity; although bonds involving phenylalanine and leucine are preferred, many others are also cleaved to some extent. The sequence is that of Pepsin A (PGA) from Callithrix jacchus (White-tufted-ear marmoset).